Reading from the N-terminus, the 284-residue chain is S-formylglutathione hydrolase (284 aa).

Ala2 is modified (N-acetylalanine). Substrate contacts are provided by Asn63 and Lys67. Catalysis depends on charge relay system residues Ser152, Asp229, and His262.

Belongs to the esterase D family. Homodimer.

It catalyses the reaction S-formylglutathione + H2O = formate + glutathione + H(+). Its activity is regulated as follows. Activity toward p-nitrophenyl acetate inhibited by N-ethylmaleimide, 10-(fluoroethoxyphosphinyl)-N-(biotinamidopentyl)decanamide (FP-biotin), iodoacetamide, CuCl(2) and ZnSO(4), but not by phenylmethylsulfonyl fluoride, EDTA, Mg(2+), Mn(2+), Ca(2+) or paraoxon, an organo-phosphate inhibitor of serine hydrolases. In terms of biological role, serine hydrolase which catalyzes the hydrolysis of S-formylglutathione to glutathione and formic acid. Also hydrolyzes S-acetylglutathione and a range of carboxyesters in vitro. Involved in the detoxification of formaldehyde. This Arabidopsis thaliana (Mouse-ear cress) protein is S-formylglutathione hydrolase (SFGH).